Here is a 145-residue protein sequence, read N- to C-terminus: Transmembrane protein 216 (145 aa).

Transmembrane regions (helical) follow at residues 22 to 42 (ILFF…LFIF), 56 to 76 (LVLD…RLFF), 89 to 109 (LSIS…YLLL), and 122 to 142 (GILL…LAAF).

Part of the tectonic-like complex (also named B9 complex). Interacts with TMEM107.

The protein localises to the membrane. It localises to the cytoplasm. Its subcellular location is the cytoskeleton. It is found in the cilium basal body. In terms of biological role, part of the tectonic-like complex which is required for tissue-specific ciliogenesis and may regulate ciliary membrane composition. This is Transmembrane protein 216 (TMEM216) from Homo sapiens (Human).